The primary structure comprises 383 residues: Protein delta homolog 1 (383 aa).

Residues 1–23 form the signal peptide; the sequence is MIATGALLRVLLLLLAFGHSTYG. 6 consecutive EGF-like domains span residues 24–55, 59–86, 88–125, 127–168, 170–206, and 208–245; these read AECD…PLCE, TSPG…KFCE, DIRA…KDCQ, KAGP…NFCE, VTNS…KTCS, and PVSN…PTCA. The Extracellular portion of the chain corresponds to 24–306; that stretch reads AECDPACDPQ…PLLTEGQAIC (283 aa). Disulfide bonds link Cys-26/Cys-37, Cys-30/Cys-43, Cys-45/Cys-54, Cys-63/Cys-68, Cys-76/Cys-85, Cys-92/Cys-103, Cys-97/Cys-113, Cys-115/Cys-124, Cys-131/Cys-144, Cys-138/Cys-156, Cys-158/Cys-167, Cys-174/Cys-185, Cys-179/Cys-194, Cys-196/Cys-205, Cys-212/Cys-223, Cys-217/Cys-233, and Cys-235/Cys-244. Residues 307-327 form a helical membrane-spanning segment; that stretch reads FTILGVLTSLVVLGTVAIVFL. At 328–383 the chain is on the cytoplasmic side; sequence NKCEAWVSNLRYNHMLRKKKNLLLQYNSGEELAVNIIFPEKIDMTTFNKEAGDEDI.

As to quaternary structure, monomer. Interacts with SH3RF2. Glycosylated. In terms of tissue distribution, pancreas and adrenal glands (at protein level).

Its subcellular location is the membrane. The protein localises to the cytoplasm. Functionally, may have a role in neuroendocrine differentiation. Inhibits adipocyte differentiation. The polypeptide is Protein delta homolog 1 (Dlk1) (Rattus norvegicus (Rat)).